The primary structure comprises 247 residues: Uridylate kinase (247 aa).

19–22 is an ATP binding site; it reads KISG. Glycine 61 serves as a coordination point for UMP. ATP is bound by residues glycine 62 and arginine 66. Residues aspartate 81 and 142–149 each bind UMP; that span reads TGNPFFTT. Residues threonine 169, glutamine 170, tyrosine 175, and aspartate 178 each contribute to the ATP site.

This sequence belongs to the UMP kinase family. As to quaternary structure, homohexamer.

It localises to the cytoplasm. The enzyme catalyses UMP + ATP = UDP + ADP. Its pathway is pyrimidine metabolism; CTP biosynthesis via de novo pathway; UDP from UMP (UMPK route): step 1/1. Its activity is regulated as follows. Inhibited by UTP. Functionally, catalyzes the reversible phosphorylation of UMP to UDP. This chain is Uridylate kinase, found in Wolbachia pipientis wMel.